Reading from the N-terminus, the 133-residue chain is Large ribosomal subunit protein bL20 (133 aa).

Belongs to the bacterial ribosomal protein bL20 family.

Its function is as follows. Binds directly to 23S ribosomal RNA and is necessary for the in vitro assembly process of the 50S ribosomal subunit. It is not involved in the protein synthesizing functions of that subunit. The chain is Large ribosomal subunit protein bL20 from Bartonella henselae (strain ATCC 49882 / DSM 28221 / CCUG 30454 / Houston 1) (Rochalimaea henselae).